We begin with the raw amino-acid sequence, 210 residues long: uncharacterized protein (210 aa).

A run of 4 helical transmembrane segments spans residues 5-25, 50-70, 75-95, and 155-175; these read LAYIPIAAMMVIIPGADTMLV, FWTVIAILGLSVVIAKSVILF, YLGAAYLIYLGVKSFFAKSMF, and IILASILTLLAVLWFLFLVYI.

Belongs to the Rht family.

It is found in the cell membrane. This is an uncharacterized protein from Bacillus subtilis (strain 168).